We begin with the raw amino-acid sequence, 220 residues long: N-(5'-phosphoribosyl)anthranilate isomerase (220 aa).

Belongs to the TrpF family.

It catalyses the reaction N-(5-phospho-beta-D-ribosyl)anthranilate = 1-(2-carboxyphenylamino)-1-deoxy-D-ribulose 5-phosphate. Its pathway is amino-acid biosynthesis; L-tryptophan biosynthesis; L-tryptophan from chorismate: step 3/5. The protein is N-(5'-phosphoribosyl)anthranilate isomerase of Xylella fastidiosa (strain M12).